We begin with the raw amino-acid sequence, 290 residues long: MDFDDHDEGDGDEEMPPMPLSSGYDAPMQPGLGGGGGGVPKPGGGVGGGGGGGGGGGGGGARYRECLKNHAVGIGGHAVDGCGEFMASGEEGSIDALRCAACGCHRNFHRKESESPTGVGPAEPSAVSPAAISAYGASPHHQFSPYYRTPAGYLHHQQHQMAAAAAAAAAAAAGGYPQRPLALPSTSHSGRDEGDDMSGMVGPMVIGPMVGMSLGSAGPSGSGSGKKRFRTKFTQEQKDKMLAFAERLGWRIQKHDEAAVQQFCEEVCVKRHVLKVWMHNNKHTLGKKAP.

Residues 1–15 are compositionally biased toward acidic residues; that stretch reads MDFDDHDEGDGDEEM. Positions 1-59 are disordered; sequence MDFDDHDEGDGDEEMPPMPLSSGYDAPMQPGLGGGGGGVPKPGGGVGGGGGGGGGGGGG. Residues 31–59 are compositionally biased toward gly residues; that stretch reads GLGGGGGGVPKPGGGVGGGGGGGGGGGGG. The ZF-HD dimerization-type; degenerate zinc finger occupies 63 to 112; sequence YRECLKNHAVGIGGHAVDGCGEFMASGEEGSIDALRCAACGCHRNFHRKE. Residues 226 to 289 constitute a DNA-binding region (homeobox); it reads KKRFRTKFTQ…NNKHTLGKKA (64 aa).

Homo- and heterodimer with other ZFHD proteins.

It localises to the nucleus. Functionally, putative transcription factor. The polypeptide is Zinc-finger homeodomain protein 2 (ZHD2) (Oryza sativa subsp. japonica (Rice)).